We begin with the raw amino-acid sequence, 256 residues long: MQQSYNPQNSLTATTSYSEQEIVCICESLFNEGLQTGRTEQLANFIYNLPQCYQVMESVLKAQALVYFTTQNWKMLYKLLECSKFSPHNHTVLQNLWLDAHYKEAAKTKDRELGAVCKYRIRKKNPFPNTIWDGEETNYCFKSKSRNVLRDAYKKCQYPSVEDKRRLAQQTELSIIQVSNWFKNKRQRERAAGQLDRSSARSNDSDDGSSGCESKPPMNIDSPAPPPLPTSFDLQPYYPSPYTFAPHCDFSYIQNL.

Residues 134 to 193 (GEETNYCFKSKSRNVLRDAYKKCQYPSVEDKRRLAQQTELSIIQVSNWFKNKRQRERAAG) constitute a DNA-binding region (homeobox). The disordered stretch occupies residues 187 to 233 (QRERAAGQLDRSSARSNDSDDGSSGCESKPPMNIDSPAPPPLPTSFD).

The protein belongs to the SIX/Sine oculis homeobox family. Interacts (via N-terminus) with eya-1 (via C-terminus). Shows expression only in the pharyngeal nervous system.

It localises to the nucleus. Its function is as follows. Acts as a transcription regulator. Binds to the sequence motif 5'-TCAGGTT-3'. Binds to the cis-regulatory element of proapoptotic factor egl-1 gene and together with eya-1 activates egl-1 expression to promote motor neuron M4 sister cell apoptosis. Also promotes apoptosis of I1 pharyngeal neuron sister cell. Together with eya-1, required to specify the coelomocyte fate in embryonic and postembryonic precursors. Required to establish and maintain the differentiation of all 14 classes of pharyngeal neurons. Controls the neurotransmitter signaling capacity of the neurons and is required for the expression of some neurotransmitter receptors including mgl-1, glr-2 and ser-7. Affects the neuropeptidergic identity of pharyngeal neurons. Required for the pharyngeal expression of sensory receptors gur-3, glu-7 and str-97, antimicrobial defense genes such as spp-12, gpla-1/flr-2 and htrl-1, and pan-pharyngeal nervous system genes such as kin-36. Required to establish and maintain pharyngeal nervous system architecture by ensuring correct axon and synapse organization. Required for expression of eya-1 which may act as a transcriptional cofactor to specify distinct pharyngeal neuron types. Cooperates with several homeobox proteins to specify distinct pharyngeal neuron types including unc-86 in the NSM and I1 neurons, ceh-14 in the I2 neuron, ceh-2 and pros-1 in the I3 neuron, ceh-45 in the M1 neuron, ceh-2 in the M3 neuron, ceh-28 and zag-1 in the M4 neuron, and vab-15 in the M5 neuron. The protein is Homeobox protein ceh-34 (ceh-34) of Caenorhabditis elegans.